The following is a 1047-amino-acid chain: MAEKRPLRTLGPVMYGKLPRLETDSGLEHSLPHSVGNQDPCTYKGSYFSCPMAGTPKAESEQLASWTPYPPLYSTGMAGPPLQADNLLTNCLFYRSPAEGPEKMQDSSPVELLPFSPQAHSYPGPPLAAPKPVYRNPLCYGLSTCLGEGAVKRPLDVDWTLATGPLLPSADPPCSLAPAPSKGQTLDGTFLRGVPAEGSSKDSSGSFSPCQPFLEKYQTIHSTGFLASRYTGPYPRNSKQAMSEGPSSPWTQLAQPLGPPCQDTGPTHYPPPHHPPPHPPQALPCPPACRHPEKQGSYSPALPLQPLGGHKGTGYQAGGLGSPYLRQQAAQAPYIPPLGLDAYPYPSAPLPAPSPGLKLEPPLTPRCPLDFAPQTLSFPYARDDLSLYGASPGLGGTPPSQNNVRAVPQPGAFQRACQPLPASQPCSEPVRPAQEAEEKTWLPSCRKEKLQPRLSEHSGPPIVIRDSPVPCTPPALPPCARECQSLPQKEGARPPSSPPMPVIDNVFSLAPYRDYLDVPAPEATTEPDSATAEPDSAPATSEGQDKGCRGTLPAQEGPSGSKPLRGSLKEEVALDLSVRKPTAEASPVKASRSVEHAKPTAAMDVPDVGNMVSDLPGLKKIDTEAPGLPGVPVTTDAMPRTNFHSSVAFMFRKFKILRPAPLPAAVVPSTPTSAPAPTQPAPTPTSGPIGLRILAQQPLSVTCFSLALPSPPAVAVASPAPAPAPSPAPARAQAPASARDPAPAPAPVAGPAPASTSAPGDSLEQHFTGLHASLCDAISGSVAHSPPEKLREWLETAGPWGQAAWQDCQGVQGLLAKLLSQLQRFDRTHRCPFPHVVRAGAIFVPIHLVKERLFPRLPPASVDHVLQEHRVELRPTTLSEERALRELALPGCTSRMLKLLALRQLPDIYPDLLGLQWRDCVRRQLGDFDTEAGAVSSSEPTVARGEPESLALAQKSPAPKVRKPGRKPPTPGPEKAEAAAGEESCGASPTPATSASPPGPTLKARFRSLLETAWLNGLALPTWGHKSSRPDQPSPCPQLLDSQSHHL.

Lysine 17 is modified (N6-acetyllysine). Disordered regions lie at residues 172-208 (PPCS…GSFS) and 236-283 (RNSK…PQAL). Position 208 is a phosphoserine (serine 208). Residues 237-254 (NSKQAMSEGPSSPWTQLA) show a composition bias toward polar residues. The span at 268–283 (HYPPPHHPPPHPPQAL) shows a compositional bias: pro residues. Phosphoserine is present on residues serine 299 and serine 391. Threonine 397 is subject to Phosphothreonine. Disordered regions lie at residues 448–469 (EKLQ…DSPV), 482–504 (ECQS…PVID), 519–567 (PAPE…LRGS), 668–690 (PSTP…GPIG), 714–763 (VAVA…GDSL), 931–1004 (EAGA…TLKA), and 1021–1047 (PTWG…SHHL). Phosphoserine occurs at positions 455, 496, and 497. Low complexity-rich tracts occupy residues 729–741 (PARA…ARDP) and 751–762 (PAPASTSAPGDS). Residues serine 936, serine 956, serine 988, and serine 996 each carry the phosphoserine modification. A compositionally biased stretch (low complexity) spans 978 to 996 (AAAGEESCGASPTPATSAS).

This is an uncharacterized protein from Homo sapiens (Human).